The primary structure comprises 442 residues: tRNA modification GTPase MnmE (442 aa).

(6S)-5-formyl-5,6,7,8-tetrahydrofolate-binding residues include Arg-21, Glu-79, and Lys-118. Residues 214–367 enclose the TrmE-type G domain; that stretch reads GFKIAIVGKP…LKEELQNYLN (154 aa). Asn-224 is a binding site for K(+). GTP contacts are provided by residues 224–229, 243–249, and 268–271; these read NVGKSS, SDIAGTT, and DTAG. A Mg(2+)-binding site is contributed by Ser-228. K(+) contacts are provided by Ser-243, Ile-245, and Thr-248. Thr-249 contributes to the Mg(2+) binding site. Lys-442 is a binding site for (6S)-5-formyl-5,6,7,8-tetrahydrofolate.

The protein belongs to the TRAFAC class TrmE-Era-EngA-EngB-Septin-like GTPase superfamily. TrmE GTPase family. In terms of assembly, homodimer. Heterotetramer of two MnmE and two MnmG subunits. Requires K(+) as cofactor.

Its subcellular location is the cytoplasm. Its function is as follows. Exhibits a very high intrinsic GTPase hydrolysis rate. Involved in the addition of a carboxymethylaminomethyl (cmnm) group at the wobble position (U34) of certain tRNAs, forming tRNA-cmnm(5)s(2)U34. The polypeptide is tRNA modification GTPase MnmE (Campylobacter jejuni subsp. jejuni serotype O:23/36 (strain 81-176)).